A 457-amino-acid chain; its full sequence is Ribosomal protein uS12 methylthiotransferase RimO (457 aa).

Positions 9 to 128 (KKVHFISLGC…ILKNSDEGEK (120 aa)) constitute an MTTase N-terminal domain. The [4Fe-4S] cluster site is built by C18, C54, C88, C163, C167, and C170. In terms of domain architecture, Radical SAM core spans 149-384 (SQPGHRAYLK…MEVQQNISRE (236 aa)). The TRAM domain occupies 387–455 (SDFVGKTLQV…EYDLIGEIVV (69 aa)).

It belongs to the methylthiotransferase family. RimO subfamily. It depends on [4Fe-4S] cluster as a cofactor.

Its subcellular location is the cytoplasm. The enzyme catalyses L-aspartate(89)-[ribosomal protein uS12]-hydrogen + (sulfur carrier)-SH + AH2 + 2 S-adenosyl-L-methionine = 3-methylsulfanyl-L-aspartate(89)-[ribosomal protein uS12]-hydrogen + (sulfur carrier)-H + 5'-deoxyadenosine + L-methionine + A + S-adenosyl-L-homocysteine + 2 H(+). Functionally, catalyzes the methylthiolation of an aspartic acid residue of ribosomal protein uS12. The sequence is that of Ribosomal protein uS12 methylthiotransferase RimO from Bdellovibrio bacteriovorus (strain ATCC 15356 / DSM 50701 / NCIMB 9529 / HD100).